We begin with the raw amino-acid sequence, 371 residues long: Cuticle collagen 71 (371 aa).

The chain crosses the membrane as a helical span at residues 38 to 60 (GYAAVTFSTVSVICFCVTMPVVF). Disordered stretches follow at residues 108-127 (AGYD…GGDA) and 153-371 (EGPH…GTRR). Over residues 174–186 (PGPPGPPGPPGRP) the composition is skewed to pro residues. Residues 188–201 (PNGKAGANGLNGNP) show a composition bias toward low complexity. A compositionally biased stretch (pro residues) spans 202 to 222 (GRPPEAPCEPVTPPPCPPCPA). A compositionally biased stretch (low complexity) spans 223-240 (GPKGAPGQAGYPGADGQP). Positions 223 to 280 (GPKGAPGQAGYPGADGQPGSQGDNGEKGSDGAAGEKGRPGPLGKIGEPGATGETGENA) constitute a Collagen-like domain. Over residues 246 to 260 (NGEKGSDGAAGEKGR) the composition is skewed to basic and acidic residues. Residues 314-323 (AGAPGAPGEN) show a composition bias toward low complexity. A compositionally biased stretch (basic and acidic residues) spans 340 to 349 (HDGKAGRAGE).

This sequence belongs to the cuticular collagen family. As to quaternary structure, collagen polypeptide chains are complexed within the cuticle by disulfide bonds and other types of covalent cross-links.

Its subcellular location is the membrane. The protein localises to the nucleus. Its function is as follows. Probable cuticular collagen-like protein. Nematode cuticles are composed largely of collagen-like proteins. The cuticle functions both as an exoskeleton and as a barrier to protect the worm from its environment. Acts downstream of the Wnt signaling pathway, perhaps in the formation of the adult cuticle. The sequence is that of Cuticle collagen 71 from Caenorhabditis elegans.